Here is a 383-residue protein sequence, read N- to C-terminus: Aurachin C monooxygenase/isomerase (383 aa).

Residues glycine 15, serine 47, valine 128, aspartate 285, and 295–299 contribute to the FAD site; that span reads GQGGC.

The cofactor is FAD.

It carries out the reaction aurachin C + NADH + O2 + H(+) = 4-hydroxy-2-methyl-3-oxo-4-[(2E,6E)-farnesyl]-3,4-dihydroquinoline 1-oxide + NAD(+) + H2O. It catalyses the reaction aurachin C + NADPH + O2 + H(+) = 4-hydroxy-2-methyl-3-oxo-4-[(2E,6E)-farnesyl]-3,4-dihydroquinoline 1-oxide + NADP(+) + H2O. The catalysed reaction is aurachin C + NADH + O2 + H(+) = aurachin C epoxide + NAD(+) + H2O. The enzyme catalyses aurachin C + NADPH + O2 + H(+) = aurachin C epoxide + NADP(+) + H2O. It carries out the reaction aurachin C epoxide = 2-hydroxy-1a-methyl-7a-[(2E,6E)-farnesyl]-1a,2-dihydrooxireno[2,3-b]quinolin-7(7aH)-one. It catalyses the reaction 2-hydroxy-1a-methyl-7a-[(2E,6E)-farnesyl]-1a,2-dihydrooxireno[2,3-b]quinolin-7(7aH)-one = 4-hydroxy-2-methyl-3-oxo-4-[(2E,6E)-farnesyl]-3,4-dihydroquinoline 1-oxide. In terms of biological role, catalyzes the initial step in the conversion of aurachin C to aurachin B. Catalyzes the epoxidation of the C(2)-C(3) double bond of aurachin C, which is followed by a semipinacol rearrangement, causing migration of the farnesyl group from C(3) to C(4). Accepts both NADH and NADPH, but has a preference for NADH. The polypeptide is Aurachin C monooxygenase/isomerase (Stigmatella aurantiaca).